We begin with the raw amino-acid sequence, 217 residues long: Protein MODIFYING WALL LIGNIN-2 (217 aa).

Residues 1–23 (MHNLFLYSVVFSLGLVSFITCFA) form the signal peptide. Over 24–51 (AEFKRTQKEDIRWDTERNCYVPGSHAFG) the chain is Cytoplasmic. A helical membrane pass occupies residues 52–72 (LGSAAVLCFCLAQIVGNIVVF). Over 73–94 (RNHRTRTKREDGYKITDLTLPT) the chain is Extracellular. The chain crosses the membrane as a helical span at residues 95-115 (VLLLLSWSNFVVVVLILSTAI). Over 116 to 137 (SMSRAQAYGEGWLDEDCYLVKD) the chain is Cytoplasmic. The helical transmembrane segment at 138–158 (GVFAASGCLAILGLGALTISA) threads the bilayer. The Extracellular segment spans residues 159–217 (TRIKVKKQQQLVQVVIKDQNQDQRRSMEEEQKHDEHQTNKSESVIHLVEEVSSTNISRI). Residues asparagine 197 and asparagine 213 are each glycosylated (N-linked (GlcNAc...) asparagine).

The protein belongs to the DESIGUAL family.

The protein localises to the cell membrane. Its function is as follows. Together with MWL1, contributes to secondary cell wall biology, specifically lignin biosynthesis. In Arabidopsis thaliana (Mouse-ear cress), this protein is Protein MODIFYING WALL LIGNIN-2.